The sequence spans 141 residues: Hemoglobin subunit alpha-D (141 aa).

A Globin domain is found at 1–141 (MLTADDKKLL…VAAVLAEKYR (141 aa)). Heme b is bound by residues His58 and His87.

The protein belongs to the globin family. As to quaternary structure, heterotetramer of two alpha-D chains and two beta chains. Red blood cells.

Its function is as follows. Involved in oxygen transport from the lung to the various peripheral tissues. The protein is Hemoglobin subunit alpha-D (HBAD) of Chloephaga melanoptera (Andean goose).